Here is a 501-residue protein sequence, read N- to C-terminus: Glycerol kinase (501 aa).

Position 17 (T17) interacts with ADP. T17, T18, and S19 together coordinate ATP. Residue T17 coordinates sn-glycerol 3-phosphate. R21 provides a ligand contact to ADP. 4 residues coordinate sn-glycerol 3-phosphate: R87, E88, Y139, and D243. Residues R87, E88, Y139, D243, and Q244 each coordinate glycerol. Residues T265 and G308 each contribute to the ADP site. Residues T265, G308, Q312, and G409 each contribute to the ATP site. G409 and N413 together coordinate ADP.

Belongs to the FGGY kinase family.

The catalysed reaction is glycerol + ATP = sn-glycerol 3-phosphate + ADP + H(+). It functions in the pathway polyol metabolism; glycerol degradation via glycerol kinase pathway; sn-glycerol 3-phosphate from glycerol: step 1/1. Its activity is regulated as follows. Inhibited by fructose 1,6-bisphosphate (FBP). Its function is as follows. Key enzyme in the regulation of glycerol uptake and metabolism. Catalyzes the phosphorylation of glycerol to yield sn-glycerol 3-phosphate. The polypeptide is Glycerol kinase (Pseudomonas fluorescens (strain SBW25)).